The primary structure comprises 558 residues: N-terminal histidine N-methyltransferase (558 aa).

Topologically, residues 1–15 are cytoplasmic; it reads MAPFRSIYEKDATKK. A helical transmembrane segment spans residues 16–32; that stretch reads LVVGAALLVLAAFYSYV. Residues 33 to 49 lie on the Lumenal side of the membrane; sequence FLLTLAPVYGSTPSHIF. The helical transmembrane segment at 50–65 threads the bilayer; sequence HGYGVGIAGVAGWFSK. The Cytoplasmic segment spans residues 66–77; that stretch reads DIVDRVSGRKAI. Residues 78 to 96 traverse the membrane as a helical segment; sequence YAIPVLAFFLPVVQYFVSQ. The Lumenal segment spans residues 97–104; that stretch reads QSSALGNP. Residues 105–131 traverse the membrane as a helical segment; that stretch reads AGPIFTEVLALYPLVLLSVACAGKLVQ. Over 132–145 the chain is Cytoplasmic; sequence AGLNLQRHGDLVAE. A helical transmembrane segment spans residues 146 to 169; sequence HIPLLGSYVIYSAGEHLIKAFLSR. Topologically, residues 170–172 are lumenal; it reads FIG. A helical membrane pass occupies residues 173 to 194; sequence STVLLSRAGLQILIAIFYAAAV. Residues 195 to 197 lie on the Cytoplasmic side of the membrane; that stretch reads PSK. Residues 198–215 form a helical membrane-spanning segment; the sequence is ALLLAIPAFLFSVTSNTH. Over 216-558 the chain is Lumenal; it reads LPLGHTTTAL…VLPDRVWEGW (343 aa).

Belongs to the methyltransferase superfamily.

It is found in the endoplasmic reticulum membrane. The enzyme catalyses L-histidyl-[protein] + S-adenosyl-L-methionine = N(tele)-methyl-L-histidyl-[protein] + S-adenosyl-L-homocysteine + H(+). Its function is as follows. Protein-histidine N-methyltransferase that specifically mediates 3-methylhistidine (tele-methylhistidine) methylation at 'His-1', which protects the side-chain from oxidative damage. Methylates lytic polysaccharide monooxygenases (LPMOs) destined for secretion, including AN4702. In Emericella nidulans (strain FGSC A4 / ATCC 38163 / CBS 112.46 / NRRL 194 / M139) (Aspergillus nidulans), this protein is N-terminal histidine N-methyltransferase.